A 339-amino-acid chain; its full sequence is UPF0324 membrane protein spyM18_1033 (339 aa).

9 consecutive transmembrane segments (helical) span residues K7 to L24, F28 to H50, G57 to L79, A84 to G106, A118 to I140, A150 to L172, F256 to V275, F290 to L307, and A314 to L336.

The protein belongs to the UPF0324 family.

It is found in the cell membrane. The polypeptide is UPF0324 membrane protein spyM18_1033 (Streptococcus pyogenes serotype M18 (strain MGAS8232)).